A 258-amino-acid polypeptide reads, in one-letter code: Type III pantothenate kinase (258 aa).

6 to 13 (DVGNTQIF) provides a ligand contact to ATP. A substrate-binding site is contributed by 107–110 (GADR). Aspartate 109 acts as the Proton acceptor in catalysis. Aspartate 130 serves as a coordination point for K(+). Position 133 (threonine 133) interacts with ATP. Threonine 185 contributes to the substrate binding site.

Belongs to the type III pantothenate kinase family. As to quaternary structure, homodimer. It depends on NH4(+) as a cofactor. K(+) is required as a cofactor.

Its subcellular location is the cytoplasm. It catalyses the reaction (R)-pantothenate + ATP = (R)-4'-phosphopantothenate + ADP + H(+). Its pathway is cofactor biosynthesis; coenzyme A biosynthesis; CoA from (R)-pantothenate: step 1/5. Functionally, catalyzes the phosphorylation of pantothenate (Pan), the first step in CoA biosynthesis. This Elusimicrobium minutum (strain Pei191) protein is Type III pantothenate kinase.